The sequence spans 747 residues: Polyribonucleotide nucleotidyltransferase (747 aa).

2 residues coordinate Mg(2+): aspartate 487 and aspartate 493. Residues 554 to 613 (PSTTTIKIDKDKIRDVIGPGGKVIKEICETSDAKIDISDDGTVSVYASDRDKLKVALDKI) form the KH domain. One can recognise an S1 motif domain in the interval 623-691 (GEIFNGTVMK…NKGKAKLTIK (69 aa)). Positions 691 to 747 (KNADKDKSSNNPKQKNNVNNSKENSEPERRDSSKKRAWNEDNNSDTTEVITERKYFN) are disordered. The segment covering 699–712 (SNNPKQKNNVNNSK) has biased composition (low complexity). Positions 730–739 (EDNNSDTTEV) are enriched in polar residues.

Belongs to the polyribonucleotide nucleotidyltransferase family. Requires Mg(2+) as cofactor.

It localises to the cytoplasm. It carries out the reaction RNA(n+1) + phosphate = RNA(n) + a ribonucleoside 5'-diphosphate. Functionally, involved in mRNA degradation. Catalyzes the phosphorolysis of single-stranded polyribonucleotides processively in the 3'- to 5'-direction. In Rickettsia akari (strain Hartford), this protein is Polyribonucleotide nucleotidyltransferase.